The sequence spans 647 residues: DNA mismatch repair protein MutL (647 aa).

The protein belongs to the DNA mismatch repair MutL/HexB family.

Functionally, this protein is involved in the repair of mismatches in DNA. It is required for dam-dependent methyl-directed DNA mismatch repair. May act as a 'molecular matchmaker', a protein that promotes the formation of a stable complex between two or more DNA-binding proteins in an ATP-dependent manner without itself being part of a final effector complex. This is DNA mismatch repair protein MutL from Bacillus cereus (strain Q1).